The chain runs to 376 residues: MGHRFLRGLLTLLLPPPPLYTRHRMLGPESVPPPKRSRSKLMAPPRIGTHNGTFHCDEALACALLRLLPEYRDAEIVRTRDPEKLASCDIVVDVGGEYDPRRHRYDHHQRSFTETMSSLSPGKPWQTKLSSAGLIYLHFGHKLLAQLLGTSEEDSMVGTLYDKMYENFVEEVDAVDNGISQWAEGEPRYALTTTLSARVARLNPTWNHPDQDTEAGFKRAMDLVQEEFLQRLDFYQHSWLPARALVEEALAQRFQVDPSGEIVELAKGACPWKEHLYHLESGLSPPVAIFFVIYTDQAGQWRIQCVPKEPHSFQSRLPLPEPWRGLRDEALDQVSGIPGCIFVHASGFIGGHRTREGALSMARATLAQRSYLPQIS.

Residues 1–47 (MGHRFLRGLLTLLLPPPPLYTRHRMLGPESVPPPKRSRSKLMAPPRI) constitute a mitochondrion transit peptide. S120 carries the post-translational modification Phosphoserine. An N6-acetyllysine mark is found at K267 and K273.

Belongs to the MYG1 family. Ubiquitously expressed, with highest levels in testis.

It is found in the nucleus. The protein resides in the nucleoplasm. It localises to the mitochondrion matrix. Its subcellular location is the nucleolus. Its function is as follows. 3'-5' RNA exonuclease which cleaves in situ on specific transcripts in both nucleus and mitochondrion. Involved in regulating spatially segregated organellar RNA processing, acts as a coordinator of nucleo-mitochondrial crosstalk. In nucleolus, processes pre-ribosomal RNA involved in ribosome assembly and alters cytoplasmic translation. In mitochondrial matrix, processes 3'-termini of the mito-ribosomal and messenger RNAs and controls translation of mitochondrial proteins. This chain is MYG1 exonuclease, found in Homo sapiens (Human).